The chain runs to 464 residues: 3-ketoacyl-CoA synthase 19 (464 aa).

The helical transmembrane segment at 3–25 (LFSLSSLLLLSTLFVFYIFKFVF) threads the bilayer. The FAE domain occupies 24–318 (VFKRRNQRNC…AIVRALKRRT (295 aa)). Catalysis depends on residues cysteine 172, histidine 251, histidine 339, histidine 343, histidine 372, and asparagine 376.

The protein belongs to the thiolase-like superfamily. Chalcone/stilbene synthases family. In terms of tissue distribution, expressed in siliques.

It is found in the membrane. The catalysed reaction is a very-long-chain acyl-CoA + malonyl-CoA + H(+) = a very-long-chain 3-oxoacyl-CoA + CO2 + CoA. Its pathway is lipid metabolism; fatty acid biosynthesis. The polypeptide is 3-ketoacyl-CoA synthase 19 (Arabidopsis thaliana (Mouse-ear cress)).